Reading from the N-terminus, the 145-residue chain is D-aminoacyl-tRNA deacylase (145 aa).

Residues 137-138 (GP) carry the Gly-cisPro motif, important for rejection of L-amino acids motif.

The protein belongs to the DTD family. Homodimer.

The protein resides in the cytoplasm. It carries out the reaction glycyl-tRNA(Ala) + H2O = tRNA(Ala) + glycine + H(+). The enzyme catalyses a D-aminoacyl-tRNA + H2O = a tRNA + a D-alpha-amino acid + H(+). In terms of biological role, an aminoacyl-tRNA editing enzyme that deacylates mischarged D-aminoacyl-tRNAs. Also deacylates mischarged glycyl-tRNA(Ala), protecting cells against glycine mischarging by AlaRS. Acts via tRNA-based rather than protein-based catalysis; rejects L-amino acids rather than detecting D-amino acids in the active site. By recycling D-aminoacyl-tRNA to D-amino acids and free tRNA molecules, this enzyme counteracts the toxicity associated with the formation of D-aminoacyl-tRNA entities in vivo and helps enforce protein L-homochirality. This Pseudomonas fluorescens (strain ATCC BAA-477 / NRRL B-23932 / Pf-5) protein is D-aminoacyl-tRNA deacylase.